We begin with the raw amino-acid sequence, 244 residues long: Serine-rich single-pass membrane protein 1 (244 aa).

The helical transmembrane segment at 35-55 threads the bilayer; that stretch reads CGTIGNFLLWYFVIVFVLMFF. 3 disordered regions span residues 65–112, 132–191, and 213–244; these read DKKD…LTPV, QSQF…LGSY, and HSQQ…FSKF. The span at 80 to 94 shows a compositional bias: basic and acidic residues; that stretch reads ASKETSYKWQSKDGA. Composition is skewed to polar residues over residues 97–112 and 132–142; these read PSQT…LTPV and QSQFNEVNQNQ. A compositionally biased stretch (basic and acidic residues) spans 161–176; it reads SWKESESEHHPSPDSI. Over residues 231–244 the composition is skewed to polar residues; sequence ESSISDINTKFSKF.

The protein localises to the membrane. In Macaca fascicularis (Crab-eating macaque), this protein is Serine-rich single-pass membrane protein 1 (SSMEM1).